A 144-amino-acid chain; its full sequence is MAFEMRPEWKKFRYRGRTLEELLKMDIEELARLFPARQRRSLLRGLTPAQQKLLLKVRKIRRRLEEGRLKRPPVIRTHVRDMVILPEMVGLTIAVYNGKEFIPVKIVPEMIGHYLGEFSPTTRIVQHGEPGLKATRSSLHVASK.

The protein belongs to the universal ribosomal protein uS19 family.

Protein S19 forms a complex with S13 that binds strongly to the 16S ribosomal RNA. This chain is Small ribosomal subunit protein uS19 (rps19), found in Aeropyrum pernix (strain ATCC 700893 / DSM 11879 / JCM 9820 / NBRC 100138 / K1).